Consider the following 225-residue polypeptide: Phosphoserine phosphatase (225 aa).

N-acetylmethionine is present on M1. The active-site Nucleophile is D20. D20 and D22 together coordinate Mg(2+). 20–22 (DVD) lines the L-serine pocket. Residue D22 is the Proton donor of the active site. M52 contacts O-phospho-L-serine. G53 lines the phosphate pocket. L-serine is bound by residues 109-111 (SGG) and K158. O-phospho-L-serine-binding positions include 109-111 (SGG) and K158. D179 provides a ligand contact to Mg(2+). T182 is a binding site for O-phospho-L-serine. T182 serves as a coordination point for phosphate.

Belongs to the HAD-like hydrolase superfamily. SerB family. In terms of assembly, homodimer. Mg(2+) serves as cofactor.

The protein localises to the cytoplasm. It is found in the cytosol. It catalyses the reaction O-phospho-L-serine + H2O = L-serine + phosphate. The catalysed reaction is O-phospho-D-serine + H2O = D-serine + phosphate. It participates in amino-acid biosynthesis; L-serine biosynthesis; L-serine from 3-phospho-D-glycerate: step 3/3. Its function is as follows. Catalyzes the last irreversible step in the biosynthesis of L-serine from carbohydrates, the dephosphorylation of O-phospho-L-serine to L-serine. L-serine can then be used in protein synthesis, to produce other amino acids, in nucleotide metabolism or in glutathione synthesis, or can be racemized to D-serine, a neuromodulator. May also act on O-phospho-D-serine. The chain is Phosphoserine phosphatase from Mus musculus (Mouse).